Here is a 273-residue protein sequence, read N- to C-terminus: Putative pyruvate, phosphate dikinase regulatory protein (273 aa).

151–158 (GVSRTSKT) is an ADP binding site.

It belongs to the pyruvate, phosphate/water dikinase regulatory protein family. PDRP subfamily.

It catalyses the reaction N(tele)-phospho-L-histidyl/L-threonyl-[pyruvate, phosphate dikinase] + ADP = N(tele)-phospho-L-histidyl/O-phospho-L-threonyl-[pyruvate, phosphate dikinase] + AMP + H(+). The catalysed reaction is N(tele)-phospho-L-histidyl/O-phospho-L-threonyl-[pyruvate, phosphate dikinase] + phosphate + H(+) = N(tele)-phospho-L-histidyl/L-threonyl-[pyruvate, phosphate dikinase] + diphosphate. In terms of biological role, bifunctional serine/threonine kinase and phosphorylase involved in the regulation of the pyruvate, phosphate dikinase (PPDK) by catalyzing its phosphorylation/dephosphorylation. In Desulfitobacterium hafniense (strain Y51), this protein is Putative pyruvate, phosphate dikinase regulatory protein.